A 456-amino-acid chain; its full sequence is Adenylosuccinate lyase (456 aa).

N(6)-(1,2-dicarboxyethyl)-AMP is bound by residues 15-16 (RY) and 90-92 (NHD). K94 carries the N6-acetyllysine modification. 122–123 (TS) contributes to the N(6)-(1,2-dicarboxyethyl)-AMP binding site. H171 (proton donor/acceptor) is an active-site residue. Q247 is a N(6)-(1,2-dicarboxyethyl)-AMP binding site. The active-site Proton donor/acceptor is S295. Residues S296, 301–303 (KVN), N309, R335, and 340–344 (STVLR) each bind N(6)-(1,2-dicarboxyethyl)-AMP. At K366 the chain carries N6-acetyllysine.

It belongs to the lyase 1 family. Adenylosuccinate lyase subfamily. In terms of assembly, homotetramer. Residues from neighboring subunits contribute catalytic and substrate-binding residues to each active site.

It catalyses the reaction N(6)-(1,2-dicarboxyethyl)-AMP = fumarate + AMP. The enzyme catalyses (2S)-2-[5-amino-1-(5-phospho-beta-D-ribosyl)imidazole-4-carboxamido]succinate = 5-amino-1-(5-phospho-beta-D-ribosyl)imidazole-4-carboxamide + fumarate. The protein operates within purine metabolism; AMP biosynthesis via de novo pathway; AMP from IMP: step 2/2. Its pathway is purine metabolism; IMP biosynthesis via de novo pathway; 5-amino-1-(5-phospho-D-ribosyl)imidazole-4-carboxamide from 5-amino-1-(5-phospho-D-ribosyl)imidazole-4-carboxylate: step 2/2. Functionally, catalyzes two reactions in de novo purine nucleotide biosynthesis. Catalyzes the breakdown of 5-aminoimidazole- (N-succinylocarboxamide) ribotide (SAICAR or 2-[5-amino-1-(5-phospho-beta-D-ribosyl)imidazole-4-carboxamido]succinate) to 5-aminoimidazole-4-carboxamide ribotide (AICAR or 5-amino-1-(5-phospho-beta-D-ribosyl)imidazole-4-carboxamide) and fumarate, and of adenylosuccinate (ADS or N(6)-(1,2-dicarboxyethyl)-AMP) to adenosine monophosphate (AMP) and fumarate. This is Adenylosuccinate lyase (purB) from Escherichia coli O6:H1 (strain CFT073 / ATCC 700928 / UPEC).